Reading from the N-terminus, the 2273-residue chain is Acetyl-CoA carboxylase, mitochondrial (2273 aa).

The transit peptide at 1 to 104 (KGKTITHGQS…RGNIHKHTRL (104 aa)) directs the protein to the mitochondrion. Residues 134-635 (VISKILIANN…STGWLDDLIL (502 aa)) form the Biotin carboxylation domain. The 193-residue stretch at 292-484 (KTNFVSVPDD…LPATQLQIAM (193 aa)) folds into the ATP-grasp domain. ATP is bound at residue 332-337 (GGGGKG). Residue arginine 459 is part of the active site. In terms of domain architecture, Biotinyl-binding spans 763–837 (LEAELNPTQV…EAGDVIAKLT (75 aa)). Lysine 804 carries the post-translational modification N6-biotinyllysine. The 336-residue stretch at 1532–1867 (PYSVKDWLQP…KRDMSPPLLE (336 aa)) folds into the CoA carboxyltransferase N-terminal domain. Positions 1532–2187 (PYSVKDWLQP…EGQVIKRLQK (656 aa)) are carboxyltransferase. CoA is bound by residues arginine 1776, lysine 2080, and arginine 2082. The CoA carboxyltransferase C-terminal domain occupies 1871-2187 (RWDRDVDFKP…EGQVIKRLQK (317 aa)).

The cofactor is biotin.

The protein resides in the mitochondrion. The enzyme catalyses hydrogencarbonate + acetyl-CoA + ATP = malonyl-CoA + ADP + phosphate + H(+). It carries out the reaction N(6)-biotinyl-L-lysyl-[protein] + hydrogencarbonate + ATP = N(6)-carboxybiotinyl-L-lysyl-[protein] + ADP + phosphate + H(+). The protein operates within lipid metabolism; malonyl-CoA biosynthesis; malonyl-CoA from acetyl-CoA: step 1/1. Catalyzes the rate-limiting reaction in the mitochondrial fatty acid synthesis (FAS) type II pathway. Responsible for the production of the mitochondrial malonyl-CoA, used for the biosynthesis of the cofactor lipoic acid. This protein carries three functions: biotin carboxyl carrier protein, biotin carboxylase, and carboxyltransferase. The polypeptide is Acetyl-CoA carboxylase, mitochondrial (HFA1) (Saccharomyces cerevisiae (strain RM11-1a) (Baker's yeast)).